A 122-amino-acid chain; its full sequence is UPF0382 membrane protein SERP0230 (122 aa).

4 helical membrane passes run 3 to 23 (VFII…AFGA), 46 to 66 (MYHG…SINV), 69 to 89 (AGWL…FLAL), and 98 to 118 (ITPI…IATL).

Belongs to the UPF0382 family.

The protein resides in the cell membrane. The polypeptide is UPF0382 membrane protein SERP0230 (Staphylococcus epidermidis (strain ATCC 35984 / DSM 28319 / BCRC 17069 / CCUG 31568 / BM 3577 / RP62A)).